A 258-amino-acid polypeptide reads, in one-letter code: Agamous-like MADS-box protein AGL3 (258 aa).

In terms of domain architecture, MADS-box spans 3–57 (RGKVELKRIENKINRQVTFAKRRNGLLKKAYELSVLCDAEIALLIFSNRGKLYEF). The K-box domain maps to 88 to 178 (LQDKYQDYLK…RRKLEDSDAA (91 aa)). The segment at 186–214 (SSAAEQQQQHQQQQQGMSSYQSNPPIQEA) is disordered. Positions 191-200 (QQQQHQQQQQ) are enriched in low complexity. Polar residues predominate over residues 201–210 (GMSSYQSNPP).

Forms homodimers. Interacts with TT16/AGL32. Expressed in aerial vegetative organs and flowers, but not in roots. Expressed in flower primordia.

It is found in the nucleus. Its function is as follows. Probable transcription factor that binds specifically to the CArG box DNA sequence 5'-CC (A/T)6 GG-3'. Plays an important role in the determination of flower meristem identity. Involved in the specification of sepal identity. Contributes to the development of petals, stamens and carpels. The polypeptide is Agamous-like MADS-box protein AGL3 (AGL3) (Arabidopsis thaliana (Mouse-ear cress)).